Consider the following 181-residue polypeptide: Oligoribonuclease (181 aa).

The Exonuclease domain occupies 8–171 (LIWVDLEMTG…DDIRESIAEL (164 aa)). The active site involves Tyr-129.

This sequence belongs to the oligoribonuclease family.

The protein localises to the cytoplasm. Its function is as follows. 3'-to-5' exoribonuclease specific for small oligoribonucleotides. The chain is Oligoribonuclease from Vibrio parahaemolyticus serotype O3:K6 (strain RIMD 2210633).